The chain runs to 413 residues: Argininosuccinate synthase (413 aa).

8-16 (AYSGGLDTS) contacts ATP. Y87 contributes to the L-citrulline binding site. Position 117 (G117) interacts with ATP. L-aspartate-binding residues include T119, N123, and D124. N123 contributes to the L-citrulline binding site. The L-citrulline site is built by R127, S175, E259, and Y271.

The protein belongs to the argininosuccinate synthase family. Type 1 subfamily. Homotetramer.

It is found in the cytoplasm. It catalyses the reaction L-citrulline + L-aspartate + ATP = 2-(N(omega)-L-arginino)succinate + AMP + diphosphate + H(+). It functions in the pathway amino-acid biosynthesis; L-arginine biosynthesis; L-arginine from L-ornithine and carbamoyl phosphate: step 2/3. The protein is Argininosuccinate synthase of Micrococcus luteus (strain ATCC 4698 / DSM 20030 / JCM 1464 / CCM 169 / CCUG 5858 / IAM 1056 / NBRC 3333 / NCIMB 9278 / NCTC 2665 / VKM Ac-2230) (Micrococcus lysodeikticus).